The sequence spans 219 residues: Vesicle-associated membrane protein 711 (219 aa).

Ala-2 carries the post-translational modification N-acetylalanine. Topologically, residues 2 to 189 (AILYALVARG…RSNVWWRNCK (188 aa)) are cytoplasmic. The Longin domain occupies 7 to 111 (LVARGTVVLS…AMNEEFSRVL (105 aa)). A v-SNARE coiled-coil homology domain is found at 126–186 (RINRIKGEMN…RRFRSNVWWR (61 aa)). The helical; Anchor for type IV membrane protein transmembrane segment at 190–210 (LTVLLILLLLVIIYIAVAFLC) threads the bilayer. The Vesicular segment spans residues 211 to 219 (HGPTLPSCI).

Belongs to the synaptobrevin family. Expressed in flowers, leaves, stems and roots.

The protein resides in the vacuole membrane. It is found in the prevacuolar compartment membrane. Its function is as follows. Involved in the targeting and/or fusion of transport vesicles to their target membrane. The polypeptide is Vesicle-associated membrane protein 711 (Arabidopsis thaliana (Mouse-ear cress)).